Consider the following 87-residue polypeptide: Putative autophagy-related protein 8E (87 aa).

Basic and acidic residues predominate over residues 1–14; it reads MEERRKEKGKEGRR. The disordered stretch occupies residues 1–30; sequence MEERRKEKGKEGRRGKATGHSVDKFSRSNL. G87 carries Phosphatidylethanolamine amidated glycine lipidation.

This sequence belongs to the ATG8 family. Interacts with ATG4. The C-terminal Gly is amidated with phosphatidylethanolamine by an activating system similar to that for ubiquitin.

It localises to the cytoplasmic vesicle. The protein resides in the autophagosome membrane. Its subcellular location is the vacuole membrane. It is found in the cytoplasm. The protein localises to the cytoskeleton. Ubiquitin-like modifier involved in autophagosomes formation. May mediate the delivery of the autophagosomes to the vacuole via the microtubule cytoskeleton. The chain is Putative autophagy-related protein 8E (ATG8E) from Oryza sativa subsp. japonica (Rice).